The following is a 179-amino-acid chain: uncharacterized protein (179 aa).

2 stretches are compositionally biased toward polar residues: residues 1-37 (PLGA…TNPG) and 60-70 (IPTQSTTTFRS). Disordered stretches follow at residues 1–41 (PLGA…PSAK) and 60–82 (IPTQ…PGRR).

In terms of tissue distribution, component of the acid-soluble and acid-insoluble organic matrix of calcified shell layers (at protein level).

The protein resides in the secreted. This is an uncharacterized protein from Haliotis asinina (Donkey's ear abalone).